A 598-amino-acid chain; its full sequence is Insulin-like growth factor 2 mRNA-binding protein 1 (598 aa).

2 RRM domains span residues 2–75 and 81–156; these read NKLY…HSVP and RKLQ…YIPD. Positions 155-195 are disordered; that stretch reads PDENSEVDSQRGPDNGRRPGYGPRGTSRQMSPGSGIPSKHQ. The span at 162–171 shows a compositional bias: basic and acidic residues; that stretch reads DSQRGPDNGR. Ser-185 carries the post-translational modification Phosphoserine. KH domains follow at residues 198–263 and 279–346; these read DIPL…CRMI and EVPL…EQEI. Position 399 is a phosphotyrosine (Tyr-399). KH domains are found at residues 407 to 472 and 489 to 555; these read QETV…QGRI and KLET…QRKI. The disordered stretch occupies residues 561 to 598; that stretch reads QVKQQQKGGGMGTPQGPHPQGMTELGSPQGLAQEPRRK. 2 positions are modified to phosphothreonine: Thr-573 and Thr-583. The span at 574–583 shows a compositional bias: low complexity; sequence PQGPHPQGMT. Ser-587 is subject to Phosphoserine.

The protein belongs to the RRM IMP/VICKZ family. As to quaternary structure, component of the CRD-mediated complex.

It localises to the nucleus. Its subcellular location is the cytoplasm. It is found in the perinuclear region. The protein resides in the P-body. The protein localises to the stress granule. It localises to the cell projection. Its subcellular location is the growth cone. It is found in the filopodium. The protein resides in the lamellipodium. In terms of biological role, RNA-binding factor that recruits target transcripts to cytoplasmic protein-RNA complexes (mRNPs). This transcript 'caging' into mRNPs allows mRNA transport and transient storage. It also modulates the rate and location at which target transcripts encounter the translational apparatus and shields them from endonuclease attacks or microRNA-mediated degradation. Preferentially binds to N6-methyladenosine (m6A)-containing mRNAs and increases their stability. Plays a direct role in the transport and translation of transcripts required for axonal regeneration in adult sensory neurons. Regulates localized beta-actin/ACTB mRNA translation in polarized cells, a crucial process for cell migration and neurite outgrowth. Promotes the directed movement of cells by fine-tuning intracellular signaling networks and enhances the velocity of cell migration. This chain is Insulin-like growth factor 2 mRNA-binding protein 1 (igf2bp1), found in Danio rerio (Zebrafish).